Reading from the N-terminus, the 298-residue chain is 4-hydroxy-tetrahydrodipicolinate synthase (298 aa).

Threonine 45 lines the pyruvate pocket. Residue tyrosine 133 is the Proton donor/acceptor of the active site. Catalysis depends on lysine 161, which acts as the Schiff-base intermediate with substrate. Isoleucine 203 is a pyruvate binding site.

It belongs to the DapA family. As to quaternary structure, homotetramer; dimer of dimers.

It localises to the cytoplasm. It catalyses the reaction L-aspartate 4-semialdehyde + pyruvate = (2S,4S)-4-hydroxy-2,3,4,5-tetrahydrodipicolinate + H2O + H(+). Its pathway is amino-acid biosynthesis; L-lysine biosynthesis via DAP pathway; (S)-tetrahydrodipicolinate from L-aspartate: step 3/4. Its function is as follows. Catalyzes the condensation of (S)-aspartate-beta-semialdehyde [(S)-ASA] and pyruvate to 4-hydroxy-tetrahydrodipicolinate (HTPA). This Wigglesworthia glossinidia brevipalpis protein is 4-hydroxy-tetrahydrodipicolinate synthase.